The sequence spans 113 residues: Large ribosomal subunit protein uL24 (113 aa).

Residues 48–70 (HRKRVTNDKGTSSGGLEKRESPM) form a disordered region.

The protein belongs to the universal ribosomal protein uL24 family. In terms of assembly, part of the 50S ribosomal subunit.

One of two assembly initiator proteins, it binds directly to the 5'-end of the 23S rRNA, where it nucleates assembly of the 50S subunit. Functionally, one of the proteins that surrounds the polypeptide exit tunnel on the outside of the subunit. The protein is Large ribosomal subunit protein uL24 of Tropheryma whipplei (strain TW08/27) (Whipple's bacillus).